Consider the following 497-residue polypeptide: Cytochrome P450 3A18 (497 aa).

A heme-binding site is contributed by Cys-442.

Belongs to the cytochrome P450 family. Heme serves as cofactor.

It is found in the endoplasmic reticulum membrane. Its subcellular location is the microsome membrane. The enzyme catalyses an organic molecule + reduced [NADPH--hemoprotein reductase] + O2 = an alcohol + oxidized [NADPH--hemoprotein reductase] + H2O + H(+). Catalyzes 16-beta- and 6-alpha-hydroxylations of testosterone. In Rattus norvegicus (Rat), this protein is Cytochrome P450 3A18 (Cyp3a18).